The sequence spans 93 residues: UPF0367 protein ssl1972 (93 aa).

Belongs to the UPF0367 family.

This chain is UPF0367 protein ssl1972, found in Synechocystis sp. (strain ATCC 27184 / PCC 6803 / Kazusa).